Reading from the N-terminus, the 103-residue chain is Large ribosomal subunit protein eL14 (103 aa).

It belongs to the eukaryotic ribosomal protein eL14 family.

This Pyrobaculum calidifontis (strain DSM 21063 / JCM 11548 / VA1) protein is Large ribosomal subunit protein eL14.